The chain runs to 210 residues: Mating-type-like protein A1 (210 aa).

Positions 141-200 form a DNA-binding region, homeobox; sequence SKKKRQRLDNSTKEFLEKVFEKNKQPNRRERELIAEKHGVSLSQIRVWFTNKRMRKKEPK.

Belongs to the MATA1 family. As to quaternary structure, forms a heterodimer with ALPHA2.

The protein resides in the nucleus. Its function is as follows. Mating type proteins are sequence specific DNA-binding proteins that act as master switches in yeast differentiation by controlling gene expression in a cell type-specific fashion. Transcriptional corepressor that acts in conjunction with ALPHA2 to repress transcription both of homozygote-specific genes and of genes necessary for the white-opaque switch, a prerequisite for mating. The sequence is that of Mating-type-like protein A1 (MTLA1) from Candida albicans (strain SC5314 / ATCC MYA-2876) (Yeast).